Reading from the N-terminus, the 365-residue chain is Aminomethyltransferase (365 aa).

Belongs to the GcvT family. In terms of assembly, the glycine cleavage system is composed of four proteins: P, T, L and H.

It carries out the reaction N(6)-[(R)-S(8)-aminomethyldihydrolipoyl]-L-lysyl-[protein] + (6S)-5,6,7,8-tetrahydrofolate = N(6)-[(R)-dihydrolipoyl]-L-lysyl-[protein] + (6R)-5,10-methylene-5,6,7,8-tetrahydrofolate + NH4(+). Its function is as follows. The glycine cleavage system catalyzes the degradation of glycine. This chain is Aminomethyltransferase, found in Bacillus pumilus (strain SAFR-032).